A 383-amino-acid polypeptide reads, in one-letter code: 1-deoxy-D-xylulose 5-phosphate reductoisomerase (383 aa).

NADPH-binding residues include T10, G11, S12, I13, G36, K37, N38, and N122. 1-deoxy-D-xylulose 5-phosphate is bound at residue K123. Residue E124 participates in NADPH binding. D148 contributes to the Mn(2+) binding site. 1-deoxy-D-xylulose 5-phosphate is bound by residues S149, E150, S174, and H197. Residue E150 participates in Mn(2+) binding. Residue G203 participates in NADPH binding. The 1-deoxy-D-xylulose 5-phosphate site is built by S210, N215, K216, and E219. E219 serves as a coordination point for Mn(2+).

It belongs to the DXR family. The cofactor is Mg(2+). Requires Mn(2+) as cofactor.

It catalyses the reaction 2-C-methyl-D-erythritol 4-phosphate + NADP(+) = 1-deoxy-D-xylulose 5-phosphate + NADPH + H(+). It participates in isoprenoid biosynthesis; isopentenyl diphosphate biosynthesis via DXP pathway; isopentenyl diphosphate from 1-deoxy-D-xylulose 5-phosphate: step 1/6. Functionally, catalyzes the NADPH-dependent rearrangement and reduction of 1-deoxy-D-xylulose-5-phosphate (DXP) to 2-C-methyl-D-erythritol 4-phosphate (MEP). The sequence is that of 1-deoxy-D-xylulose 5-phosphate reductoisomerase from Bacillus licheniformis (strain ATCC 14580 / DSM 13 / JCM 2505 / CCUG 7422 / NBRC 12200 / NCIMB 9375 / NCTC 10341 / NRRL NRS-1264 / Gibson 46).